Reading from the N-terminus, the 297-residue chain is Release factor glutamine methyltransferase (297 aa).

Residues 134-138, aspartate 157, and asparagine 200 each bind S-adenosyl-L-methionine; that span reads GTGSG. 200–203 is a substrate binding site; it reads NPPY.

This sequence belongs to the protein N5-glutamine methyltransferase family. PrmC subfamily.

It carries out the reaction L-glutaminyl-[peptide chain release factor] + S-adenosyl-L-methionine = N(5)-methyl-L-glutaminyl-[peptide chain release factor] + S-adenosyl-L-homocysteine + H(+). Its function is as follows. Methylates the class 1 translation termination release factors RF1/PrfA and RF2/PrfB on the glutamine residue of the universally conserved GGQ motif. In Bradyrhizobium diazoefficiens (strain JCM 10833 / BCRC 13528 / IAM 13628 / NBRC 14792 / USDA 110), this protein is Release factor glutamine methyltransferase.